The chain runs to 353 residues: Nicotinate-nucleotide--dimethylbenzimidazole phosphoribosyltransferase (353 aa).

The Proton acceptor role is filled by glutamate 319.

It belongs to the CobT family.

It catalyses the reaction 5,6-dimethylbenzimidazole + nicotinate beta-D-ribonucleotide = alpha-ribazole 5'-phosphate + nicotinate + H(+). The protein operates within nucleoside biosynthesis; alpha-ribazole biosynthesis; alpha-ribazole from 5,6-dimethylbenzimidazole: step 1/2. Its function is as follows. Catalyzes the synthesis of alpha-ribazole-5'-phosphate from nicotinate mononucleotide (NAMN) and 5,6-dimethylbenzimidazole (DMB). The protein is Nicotinate-nucleotide--dimethylbenzimidazole phosphoribosyltransferase of Chlorobaculum parvum (strain DSM 263 / NCIMB 8327) (Chlorobium vibrioforme subsp. thiosulfatophilum).